The chain runs to 544 residues: Chaperonin GroEL (544 aa).

ATP-binding positions include 30–33 (TLGP), Lys-51, 87–91 (DGTTT), Gly-415, and Asp-495.

Belongs to the chaperonin (HSP60) family. As to quaternary structure, forms a cylinder of 14 subunits composed of two heptameric rings stacked back-to-back. Interacts with the co-chaperonin GroES.

The protein resides in the cytoplasm. The enzyme catalyses ATP + H2O + a folded polypeptide = ADP + phosphate + an unfolded polypeptide.. Together with its co-chaperonin GroES, plays an essential role in assisting protein folding. The GroEL-GroES system forms a nano-cage that allows encapsulation of the non-native substrate proteins and provides a physical environment optimized to promote and accelerate protein folding. The polypeptide is Chaperonin GroEL (Neisseria gonorrhoeae (strain ATCC 700825 / FA 1090)).